Reading from the N-terminus, the 506-residue chain is Nostrin (506 aa).

The region spanning 1-260 (MRDPLTDCPY…AISKIDIEKD (260 aa)) is the F-BAR domain. Position 114 is a phosphoserine (serine 114). Positions 160 to 222 (SMTEKEKRKL…LELEKERIQL (63 aa)) form a coiled coil. The region spanning 292–372 (AMDKERRKSL…SYKLSSMLAE (81 aa)) is the REM-1 domain. The SH3 domain maps to 438–497 (LSSRLCKALYSFQARQDDELNLEKGDIVIIHEKKEGGWWFGSLNGKKGHFPAAYVEELPS). Serine 479 is subject to Phosphoserine.

Homotrimer. Interacts with DAB2. Interacts with NOS3, DNM2, WASL and CAV1. Interacts (via SH3 domain) with DNM2; this interaction allows the recruitment of NOS3 to dynamin-positive structures. In terms of tissue distribution, expressed at highest levels in heart, kidney, placenta and lung, and at lowest levels in brain, thymus and spleen. Present in vascular endothelial cells and placenta. Over-expressed in placenta from women with pre-eclampsia (at protein level).

Its subcellular location is the cell membrane. It localises to the cytoplasmic vesicle. The protein localises to the cytoplasm. The protein resides in the cytoskeleton. It is found in the nucleus. In terms of biological role, multivalent adapter protein which may decrease NOS3 activity by inducing its translocation away from the plasma membrane. In Homo sapiens (Human), this protein is Nostrin.